The primary structure comprises 70 residues: uncharacterized protein (70 aa).

This is an uncharacterized protein from Vaccinia virus (strain Copenhagen) (VACV).